Consider the following 46-residue polypeptide: Iota-conotoxin RXIA (46 aa).

4-hydroxyproline; partial is present on residues proline 2 and proline 11. 4 disulfide bridges follow: cysteine 5-cysteine 19, cysteine 12-cysteine 22, cysteine 18-cysteine 27, and cysteine 21-cysteine 38. 4-hydroxyproline is present on proline 29. Phenylalanine 44 carries the post-translational modification D-phenylalanine.

It belongs to the conotoxin I1 superfamily. In terms of processing, the natural D-Phe-44 form of the peptide is more potent than the L-Phe-44 form. As to expression, expressed by the venom duct.

It is found in the secreted. Iota-conotoxins bind to voltage-gated sodium channels and act as agonists by shifting the voltage-dependence of activation to more hyperpolarized levels. This toxin acts on Nav1.6/SCN8A &gt; Nav1.2/SCN2A &gt; Nav1.7/SCN9A sodium channels. Produces general excitatory symptoms upon intracorporeal injection and repetitive action potentials in the frog cutaneous pectoris muscle. Natural peptide (with D-Phe) is active on nerve, but not on muscle. Synthetic peptide (with L-Phe) is not active on both nerve and muscle. This Conus radiatus (Rayed cone) protein is Iota-conotoxin RXIA.